We begin with the raw amino-acid sequence, 248 residues long: ATP synthase subunit a, chloroplastic (248 aa).

A run of 5 helical transmembrane segments spans residues 38 to 58 (QVLL…TIAV), 96 to 116 (VPFI…GALL), 135 to 155 (INTT…AGLT), 200 to 220 (LVVA…VMFL), and 221 to 241 (GLFT…AYIG).

It belongs to the ATPase A chain family. In terms of assembly, F-type ATPases have 2 components, CF(1) - the catalytic core - and CF(0) - the membrane proton channel. CF(1) has five subunits: alpha(3), beta(3), gamma(1), delta(1), epsilon(1). CF(0) has four main subunits: a, b, b' and c.

Its subcellular location is the plastid. It is found in the chloroplast thylakoid membrane. Functionally, key component of the proton channel; it plays a direct role in the translocation of protons across the membrane. This Pinus thunbergii (Japanese black pine) protein is ATP synthase subunit a, chloroplastic.